Consider the following 510-residue polypeptide: Mitogen-activated protein kinase 9 (510 aa).

One can recognise a Protein kinase domain in the interval 23–314 (YQIQEVIGKG…AEEALADPYF (292 aa)). Residues 29–37 (IGKGSYGVV) and Lys-52 contribute to the ATP site. Asp-149 (proton acceptor) is an active-site residue. Thr-185 carries the post-translational modification Phosphothreonine. Positions 185–187 (TDY) match the TXY motif. Tyr-187 is subject to Phosphotyrosine. Residue Thr-190 is modified to Phosphothreonine. The tract at residues 393–461 (NYGKGEKGSP…SDYRNGTSQT (69 aa)) is disordered. The segment covering 410 to 431 (LPRERVPAPKKENGSHNHDIEN) has biased composition (basic and acidic residues). The segment covering 433–461 (SIASLVTTLESPPTSQHEGSDYRNGTSQT) has biased composition (polar residues).

The protein belongs to the protein kinase superfamily. CMGC Ser/Thr protein kinase family. MAP kinase subfamily. Dually phosphorylated on Thr-185 and Tyr-187, which activates the enzyme.

It catalyses the reaction L-seryl-[protein] + ATP = O-phospho-L-seryl-[protein] + ADP + H(+). The catalysed reaction is L-threonyl-[protein] + ATP = O-phospho-L-threonyl-[protein] + ADP + H(+). Activated by threonine and tyrosine phosphorylation. This Arabidopsis thaliana (Mouse-ear cress) protein is Mitogen-activated protein kinase 9 (MPK9).